The following is a 166-amino-acid chain: Small ribosomal subunit protein uS5 (166 aa).

The 64-residue stretch at 12–75 folds into the S5 DRBM domain; sequence YIEKLVQVNR…EAARRNMIQV (64 aa).

It belongs to the universal ribosomal protein uS5 family. Part of the 30S ribosomal subunit. Contacts proteins S4 and S8.

In terms of biological role, with S4 and S12 plays an important role in translational accuracy. Located at the back of the 30S subunit body where it stabilizes the conformation of the head with respect to the body. The protein is Small ribosomal subunit protein uS5 of Pseudomonas putida (strain ATCC 700007 / DSM 6899 / JCM 31910 / BCRC 17059 / LMG 24140 / F1).